Here is a 212-residue protein sequence, read N- to C-terminus: Imidazole glycerol phosphate synthase subunit HisH (212 aa).

Residues 1–211 (MIGVIDYGMG…KQFTQEQKVK (211 aa)) form the Glutamine amidotransferase type-1 domain. Cys79 acts as the Nucleophile in catalysis. Catalysis depends on residues His186 and Glu188.

As to quaternary structure, heterodimer of HisH and HisF.

It localises to the cytoplasm. It catalyses the reaction 5-[(5-phospho-1-deoxy-D-ribulos-1-ylimino)methylamino]-1-(5-phospho-beta-D-ribosyl)imidazole-4-carboxamide + L-glutamine = D-erythro-1-(imidazol-4-yl)glycerol 3-phosphate + 5-amino-1-(5-phospho-beta-D-ribosyl)imidazole-4-carboxamide + L-glutamate + H(+). It carries out the reaction L-glutamine + H2O = L-glutamate + NH4(+). The protein operates within amino-acid biosynthesis; L-histidine biosynthesis; L-histidine from 5-phospho-alpha-D-ribose 1-diphosphate: step 5/9. In terms of biological role, IGPS catalyzes the conversion of PRFAR and glutamine to IGP, AICAR and glutamate. The HisH subunit catalyzes the hydrolysis of glutamine to glutamate and ammonia as part of the synthesis of IGP and AICAR. The resulting ammonia molecule is channeled to the active site of HisF. The sequence is that of Imidazole glycerol phosphate synthase subunit HisH from Bacillus licheniformis (strain ATCC 14580 / DSM 13 / JCM 2505 / CCUG 7422 / NBRC 12200 / NCIMB 9375 / NCTC 10341 / NRRL NRS-1264 / Gibson 46).